A 328-amino-acid chain; its full sequence is Tetraacyldisaccharide 4'-kinase (328 aa).

59–66 (TAGGNGKT) is a binding site for ATP.

It belongs to the LpxK family.

It carries out the reaction a lipid A disaccharide + ATP = a lipid IVA + ADP + H(+). Its pathway is glycolipid biosynthesis; lipid IV(A) biosynthesis; lipid IV(A) from (3R)-3-hydroxytetradecanoyl-[acyl-carrier-protein] and UDP-N-acetyl-alpha-D-glucosamine: step 6/6. Transfers the gamma-phosphate of ATP to the 4'-position of a tetraacyldisaccharide 1-phosphate intermediate (termed DS-1-P) to form tetraacyldisaccharide 1,4'-bis-phosphate (lipid IVA). The chain is Tetraacyldisaccharide 4'-kinase from Aliivibrio fischeri (strain ATCC 700601 / ES114) (Vibrio fischeri).